The primary structure comprises 443 residues: RILP-like protein homolog (443 aa).

The region spanning 8 to 96 is the RH1 domain; it reads EMGEMVLDAI…ESEKLEKAEF (89 aa). The stretch at 59–315 forms a coiled coil; that stretch reads LELLEALATK…TLNEQLAELK (257 aa). Residues 282–401 form the RH2 domain; the sequence is RPRYTTRELK…KSSESGIRKF (120 aa). The disordered stretch occupies residues 311 to 394; sequence LAELKPPSQA…PDDAPWKKSS (84 aa). Residues 332 to 355 are compositionally biased toward acidic residues; the sequence is DDSDEDDDGHVADNDDDDDEEEAA. Positions 356–368 are enriched in low complexity; sequence AEANELEPPAAGE.

This sequence belongs to the RILPL family. Interacts with Arl8 (in GTP-bound form).

The protein localises to the lysosome membrane. In terms of biological role, may have a role in lysosome distribution by interacting with Arl8. In Drosophila melanogaster (Fruit fly), this protein is RILP-like protein homolog.